The chain runs to 242 residues: UDP-2,3-diacylglucosamine hydrolase (242 aa).

Residues D7, H9, D40, N78, and H113 each contribute to the Mn(2+) site. 78–79 is a substrate binding site; that stretch reads NR. Substrate is bound by residues D121, S159, T163, K166, and H194. 2 residues coordinate Mn(2+): H194 and H196.

It belongs to the LpxH family. It depends on Mn(2+) as a cofactor.

The protein resides in the cell inner membrane. It carries out the reaction UDP-2-N,3-O-bis[(3R)-3-hydroxytetradecanoyl]-alpha-D-glucosamine + H2O = 2-N,3-O-bis[(3R)-3-hydroxytetradecanoyl]-alpha-D-glucosaminyl 1-phosphate + UMP + 2 H(+). The protein operates within glycolipid biosynthesis; lipid IV(A) biosynthesis; lipid IV(A) from (3R)-3-hydroxytetradecanoyl-[acyl-carrier-protein] and UDP-N-acetyl-alpha-D-glucosamine: step 4/6. Hydrolyzes the pyrophosphate bond of UDP-2,3-diacylglucosamine to yield 2,3-diacylglucosamine 1-phosphate (lipid X) and UMP by catalyzing the attack of water at the alpha-P atom. Involved in the biosynthesis of lipid A, a phosphorylated glycolipid that anchors the lipopolysaccharide to the outer membrane of the cell. The protein is UDP-2,3-diacylglucosamine hydrolase of Ectopseudomonas mendocina (strain ymp) (Pseudomonas mendocina).